A 426-amino-acid chain; its full sequence is Neuromedin-U receptor 1 (426 aa).

The Extracellular portion of the chain corresponds to 1 to 65 (MTPLCLNCSV…QTELFMPICA (65 aa)). 3 N-linked (GlcNAc...) asparagine glycosylation sites follow: Asn-7, Asn-27, and Asn-41. Residues 66-86 (TYLLIFVVGAVGNGLTCLVIL) traverse the membrane as a helical segment. Topologically, residues 87-97 (RHKAMRTPTNY) are cytoplasmic. A helical membrane pass occupies residues 98–118 (YLFSLAVSDLLVLLVGLPLEL). Topologically, residues 119-138 (YEMWHNYPFLLGVGGCYFRT) are extracellular. Cysteines 134 and 219 form a disulfide. Residues 139–161 (LLFEMVCLASVLNVTALSVERYV) traverse the membrane as a helical segment. Residues 162 to 181 (AVVHPLQARSMVTRAHVRRV) are Cytoplasmic-facing. A helical membrane pass occupies residues 182 to 202 (LGAVWGLAMLCSLPNTSLHGI). Residues 203 to 235 (RQLHVPCRGPVPDSAVCMLVRPRALYNMVVQTT) lie on the Extracellular side of the membrane. The chain crosses the membrane as a helical span at residues 236 to 256 (ALLFFCLPMAIMSVLYLLIGL). The Cytoplasmic segment spans residues 257–294 (RLRRERLLLMQEAKGRGSAAARSRYTCRLQQHDRGRRQ). Residues 295–315 (VTKMLFVLVVVFGICWAPFHA) form a helical membrane-spanning segment. Topologically, residues 316-338 (DRVMWSVVSQWTDGLHLAFQHVH) are extracellular. The chain crosses the membrane as a helical span at residues 339–359 (VISGIFFYLGSAANPVLYSLM). The Cytoplasmic portion of the chain corresponds to 360 to 426 (SSRFRETFQE…PEAQQETDPS (67 aa)).

The protein belongs to the G-protein coupled receptor 1 family. In terms of tissue distribution, expressed in greatest abundance in peripheral organs, particularly in elements of the gastrointestinal and urogenital systems with highest levels in testes. In central nervous system structures express levels are much lower than those seen in peripheral organs. Within the CNS, has been detected in highest abundance in the cerebellum, dorsal root ganglia, hippocampus, and spinal cord.

The protein resides in the cell membrane. In terms of biological role, receptor for the neuromedin-U and neuromedin-S neuropeptides. The sequence is that of Neuromedin-U receptor 1 (NMUR1) from Homo sapiens (Human).